The following is a 346-amino-acid chain: MSASKEEIAALIVNYFSSIVEKKEISEDGADSLNVAMDCISEAFGFEREAVSGILGKSEFKGQHLADILNSASRVPESNKKDDAENVEINIPEDDAETKAKAEDLKMQGNKAMANKDYELAINKYTEAIKVLPTNAIYYANRAAAHSSLKEYDQAVKDAESAISIDPSYFRGYSRLGFAKYAQGKPEEALEAYKKVLDIEGDNATEAMKRDYESAKKKVEQSLNLEKTVPEQSRDADVDASQGASAGGLPDLGSLLGGGLGGLMNNPQLMQAAQKMMSNPGAMQNIQKMMQDPSIRQMAEGFASGGGTPNLSDLMNNPALRNMAGNLFGGAGAQSTDETPDNENKQ.

TPR repeat units follow at residues 102-135, 136-169, 170-203, and 205-229; these read AEDLKMQGNKAMANKDYELAINKYTEAIKVLPTN, AIYYANRAAAHSSLKEYDQAVKDAESAISIDPSY, FRGYSRLGFAKYAQGKPEEALEAYKKVLDIEGDN, and TEAMKRDYESAKKKVEQSLNLEKTV. The tract at residues 219 to 249 is disordered; it reads VEQSLNLEKTVPEQSRDADVDASQGASAGGL. The span at 228–237 shows a compositional bias: basic and acidic residues; sequence TVPEQSRDAD. At threonine 308 the chain carries Phosphothreonine. The disordered stretch occupies residues 325-346; sequence GNLFGGAGAQSTDETPDNENKQ.

The protein belongs to the SGT family. In terms of assembly, interacts with HSC82, HSP104, MDY2, SSA1 and SSA2.

The protein resides in the cytoplasm. Co-chaperone that binds to the molecular chaperone Hsp70 (SSA1 and SSA2). Regulates Hsp70 ATPase activity. Required for recovery from heat shock. The protein is Small glutamine-rich tetratricopeptide repeat-containing protein 2 (SGT2) of Saccharomyces cerevisiae (strain ATCC 204508 / S288c) (Baker's yeast).